A 252-amino-acid polypeptide reads, in one-letter code: Trans-aconitate 2-methyltransferase (252 aa).

It belongs to the methyltransferase superfamily. Tam family.

It localises to the cytoplasm. The enzyme catalyses trans-aconitate + S-adenosyl-L-methionine = (E)-3-(methoxycarbonyl)pent-2-enedioate + S-adenosyl-L-homocysteine. In terms of biological role, catalyzes the S-adenosylmethionine monomethyl esterification of trans-aconitate. This is Trans-aconitate 2-methyltransferase from Shigella flexneri.